The sequence spans 508 residues: Protein adenylyltransferase fic-1 (508 aa).

A helical membrane pass occupies residues T44–V64. 2 TPR repeats span residues A147–N180 and P181–N214. Residues T270–G275 carry the Inhibitory (S/T)XXXE(G/N) motif motif. E274 provides a ligand contact to ATP. Residues I326 to K461 form the Fido domain. T352 bears the O-AMP-threonine; by autocatalysis mark. Residue V357 to F360 coordinates ATP. Residue H404 is part of the active site. Residues D408–R415, Y440–Y441, and N448 contribute to the ATP site. An O-AMP-threonine; by autocatalysis modification is found at T476. The disordered stretch occupies residues L482–N508. Positions V496–N508 are enriched in basic and acidic residues.

This sequence belongs to the fic family. As to quaternary structure, forms homodimers; homodimerization might be required for adenylyltransferase activity. In terms of tissue distribution, ubiquitously expressed, with high expression in the germline.

It localises to the endoplasmic reticulum membrane. The protein localises to the nucleus membrane. It catalyses the reaction L-tyrosyl-[protein] + ATP = O-(5'-adenylyl)-L-tyrosyl-[protein] + diphosphate. The enzyme catalyses L-threonyl-[protein] + ATP = 3-O-(5'-adenylyl)-L-threonyl-[protein] + diphosphate. It carries out the reaction 3-O-(5'-adenylyl)-L-threonyl-[protein] + H2O = L-threonyl-[protein] + AMP + H(+). The side chain of Glu-274 determines which of the two opposing activities (AMPylase or de-AMPylase) will take place. In response to endoplasmic reticulum stress, mediates de-AMPylase activity. Adenylyltransferase activity is inhibited by the inhibitory helix present at the N-terminus: Glu-274 binds ATP and competes with ATP-binding at Arg-415, thereby preventing adenylyltransferase activity. In unstressed cells, disengagement of Glu-274 promotes adenylyltransferase activity. Activation dissociates ATP-binding from Glu-274, allowing ordered binding of the entire ATP moiety with the alpha-phosphate in an orientation that is productive for accepting an incoming target hydroxyl side chain. In terms of biological role, protein that can both mediate the addition of adenosine 5'-monophosphate (AMP) to specific residues of target proteins (AMPylation), and the removal of the same modification from target proteins (de-AMPylation), depending on the context. The side chain of Glu-274 determines which of the two opposing activities (AMPylase or de-AMPylase) will take place. Adenylyltransferase that mediates the addition of adenosine 5'-monophosphate (AMP) to specific residues of target proteins. In vivo target proteins include the heat-shock 70 family proteins hsp-1 and hsp-3 and the translation elongation factors eef-1A, eef-1G and eef-2. Can AMPylate core histone H3 in vitro. Can also act as a phosphodiesterase by mediating removal of ATP (de-AMPylation) from target proteins. Decreases susceptibility to P.aeruginosa-mediated killing and might therefore play a role in the innate immune response. This chain is Protein adenylyltransferase fic-1, found in Caenorhabditis elegans.